The chain runs to 1102 residues: DNA-directed RNA polymerase subunit beta (1102 aa).

A disordered region spans residues 1076–1102; sequence IDSQRRAPNRPTYESLHTEEDLEEEEV.

The protein belongs to the RNA polymerase beta chain family. As to quaternary structure, in cyanobacteria the RNAP catalytic core is composed of 2 alpha, 1 beta, 1 beta', 1 gamma and 1 omega subunit. When a sigma factor is associated with the core the holoenzyme is formed, which can initiate transcription.

The catalysed reaction is RNA(n) + a ribonucleoside 5'-triphosphate = RNA(n+1) + diphosphate. Functionally, DNA-dependent RNA polymerase catalyzes the transcription of DNA into RNA using the four ribonucleoside triphosphates as substrates. This chain is DNA-directed RNA polymerase subunit beta, found in Synechocystis sp. (strain ATCC 27184 / PCC 6803 / Kazusa).